We begin with the raw amino-acid sequence, 412 residues long: Thyroxine-binding globulin (412 aa).

The signal sequence occupies residues Met1 to Cys16. N-linked (GlcNAc...) asparagine glycosylation is found at Asn20, Asn35, Asn98, Asn164, and Asn252. Residues Asn292 and Lys395 each coordinate thyroxine.

It belongs to the serpin family. In terms of tissue distribution, expressed by the liver and secreted in plasma.

Its subcellular location is the secreted. In terms of biological role, major thyroid hormone transport protein in serum. The polypeptide is Thyroxine-binding globulin (SERPINA7) (Sus scrofa (Pig)).